The primary structure comprises 631 residues: Integrator complex subunit 10 (631 aa).

Residues 545-570 are compositionally biased toward polar residues; it reads FELTSSPNSSGTPTATTVAGGSQSRR. The segment at 545–577 is disordered; the sequence is FELTSSPNSSGTPTATTVAGGSQSRRIGTRGAD.

This sequence belongs to the Integrator subunit 10 family. In terms of assembly, belongs to the multiprotein complex Integrator, at least composed of IntS1, IntS2, IntS3, IntS4, omd/IntS5, IntS6, defl/IntS7, IntS8, IntS9, IntS10, IntS11, IntS12, asun/IntS13, IntS14 and IntS15. The core complex associates with protein phosphatase 2A subunits mts/PP2A and Pp2A-29B, to form the Integrator-PP2A (INTAC) complex.

Its subcellular location is the nucleus. Component of the integrator complex, a multiprotein complex that terminates RNA polymerase II (Pol II) transcription in the promoter-proximal region of genes. The integrator complex provides a quality checkpoint during transcription elongation by driving premature transcription termination of transcripts that are unfavorably configured for transcriptional elongation: the complex terminates transcription by (1) catalyzing dephosphorylation of the C-terminal domain (CTD) of Pol II subunit Polr2A/Rbp1 and Spt5, and (2) degrading the exiting nascent RNA transcript via endonuclease activity. The integrator complex is also involved in the 3'-end processing of the U7 snRNA, and also the spliceosomal snRNAs U1, U2, U4 and U5. The sequence is that of Integrator complex subunit 10 from Drosophila melanogaster (Fruit fly).